Here is a 122-residue protein sequence, read N- to C-terminus: Ribosomal protein eL22-like 1 (122 aa).

Serine 112, serine 118, and serine 120 each carry phosphoserine.

It belongs to the eukaryotic ribosomal protein eL22 family.

The protein is Ribosomal protein eL22-like 1 (Rpl22l1) of Mus musculus (Mouse).